Here is a 240-residue protein sequence, read N- to C-terminus: UDP-2,3-diacylglucosamine hydrolase (240 aa).

Mn(2+) contacts are provided by aspartate 8, histidine 10, aspartate 41, asparagine 78, and histidine 113. 78-79 is a substrate binding site; the sequence is NR. Substrate-binding residues include aspartate 121, serine 159, asparagine 163, lysine 166, and histidine 194. Positions 194 and 196 each coordinate Mn(2+).

The protein belongs to the LpxH family. Mn(2+) serves as cofactor.

It is found in the cell inner membrane. It catalyses the reaction UDP-2-N,3-O-bis[(3R)-3-hydroxytetradecanoyl]-alpha-D-glucosamine + H2O = 2-N,3-O-bis[(3R)-3-hydroxytetradecanoyl]-alpha-D-glucosaminyl 1-phosphate + UMP + 2 H(+). It functions in the pathway glycolipid biosynthesis; lipid IV(A) biosynthesis; lipid IV(A) from (3R)-3-hydroxytetradecanoyl-[acyl-carrier-protein] and UDP-N-acetyl-alpha-D-glucosamine: step 4/6. Functionally, hydrolyzes the pyrophosphate bond of UDP-2,3-diacylglucosamine to yield 2,3-diacylglucosamine 1-phosphate (lipid X) and UMP by catalyzing the attack of water at the alpha-P atom. Involved in the biosynthesis of lipid A, a phosphorylated glycolipid that anchors the lipopolysaccharide to the outer membrane of the cell. The polypeptide is UDP-2,3-diacylglucosamine hydrolase (Shewanella baltica (strain OS185)).